A 445-amino-acid polypeptide reads, in one-letter code: Exodeoxyribonuclease 7 large subunit (445 aa).

This sequence belongs to the XseA family. In terms of assembly, heterooligomer composed of large and small subunits.

It localises to the cytoplasm. It carries out the reaction Exonucleolytic cleavage in either 5'- to 3'- or 3'- to 5'-direction to yield nucleoside 5'-phosphates.. In terms of biological role, bidirectionally degrades single-stranded DNA into large acid-insoluble oligonucleotides, which are then degraded further into small acid-soluble oligonucleotides. The polypeptide is Exodeoxyribonuclease 7 large subunit (Staphylococcus epidermidis (strain ATCC 12228 / FDA PCI 1200)).